A 3255-amino-acid polypeptide reads, in one-letter code: MATLDNCTQVHHMFAYNREHGTNYTRNHFRRYLAAQRIGFYYDWDDDVYECPTCEAIYHSLDEIKNWHECDPPAFDLNDFITDARLKSAPVPDLGPVIVETPKVEEKQELNFFAATPAPEVLQWKCRGLQFGSFTELETSEPVVSAPKPNCEEPARTIAKPEEPVEQETCGDGKRLLQAQMEVDKAEQDLAFAYLSASLKPRLEGRTTATIARRRDGCLVYKTKPSWSQRKGTKKILKVDTLACKNPYIPAVVDKISIAGGSSASVMHEQQKPKILHTTPSRKVATHYKRTVMNQQTLTALINQVGTIILNAEKEFEVVGCRKQKVTGKGTRHNGVRLVKLKTAHEEGHRRKVDIRIPNGLRSIVTRISARGGWHKTWTDSELSPGSSGYVLNSSKIIGEFGLRRHSIFVVRGRVYGKIIDSQSKVTHTLTHRMVQYSDVARNFWNGYSTCFMHNTPKDILHTCTSDFDVKDCGTVAALLTQTLFQFGKITCGKCAIEYKNLTRDELATRVNKEIDGTIISIQTQHPRFVHVLNFLRLIKQVLNAKNGNFGAFQETERIIGDRMDAPFSHVNKLNAIVIKGNQATSDEMAQASNHVLEIARYFKNRTENIQKGSLKSFRNKISGKAHLNPSLMCDNQLDKNGGFEWGQRSYHAKRFFDGYFETIDPSDGYSKYTIRRNPNGHRKLAIGNLIVSTNFESHRRSMVGEPIEDPGLTNQCVSKEGGAFIYPCCCVTDEYGKPTLSEIKMPTKHHLVLGNAGDPKYVDLPKEAEGKMFVAKDGYCYINIFLAMLVDVPEDQAKDFTKMAREIAVKQLGEWPSMMDVATACNILATFHPDTRRSELPRILVDHATKTFHVIDSYGSITTGYHILKANTVTQLVKFAHESLESEMQHYRVGGEPDKAPRKPAGNVPTLGISDLKNLGVESENEEHSIRPNLQRLIKAIYRPRMMRSLLTEEPYLLILSIVSPGVLMALYNSGSLERTMHEFLQTDQRLSATAQILKHLAKKVSLAKTLTIQNAILEGGAGSLNEILDAPAGRSLSYRLAKQTVEVMMARSDMDKELVDVGFSVLRDQKNELIEKSYLMDLEDSWRALPLCGKLSAMRVSRRWRDTSTPEAIPTGAADLKGRYSISVGSVSKSAILHLKGICSGAVKRVKDKWVGVQVQGVKWLAKSVHYMIPELTNILNVGTLLLTLISLGVRFRSLTGQFKEMKYKETLAREEELRKRIRTYNSTYYEIHGKHADAKQITKFITHHDPKLLEVVEFYEGPEEEEVEHQAKREDQANLERIIAFTALVMMMFDSERSDCVYRSLSKLKSLVSTCDDDVRHQSVDEIIDLFDEKKETIDFEIEGKELYSSRVVDSTFSKWWDNQLVRGNTMAHYRTEGHFMTFTRETAASVAAEIAHNEYRDILLQGGVGSGKSTGLPFHLHKKGGVLLIEPTRPLAQNVYKQLGSNPFHLSPNLRMRGACKFGSSQVTVATSGYALHFIANNAQSLKMFDFIIFDECHVLDASAMAFRCLLQEFEYQGKIIKVSATPPGRKLDFKPMHMVDITTENELSIQQFVQGQGTGVNCDATKKGDNILVYVSSYNEVDMLSKMLNDKGYKVTKVDGRTMKLGSVEVETVGTPQRKHFVVATNIIENGVTLDVDVVVDFGQKVVPILDSEHRMIRYTKKSITYGERIQRVGRVGRNKAGSAIRIGSTEMGTEEIPASIATEAAFLCFTYGLPVMTSNVSTSVLGNCTVRQARTMQKFELSPFFMVDLVHHDGTVHPAINSLLRQFKLKESDTKLSTLAIPNAVTTFWKSAREYNSLGARTTIDDAAKIPFMIKDVPEHLQEKLWETIQQYKGDAGFGRCTSANACKIAYTLSVSPFMIPATINKIDALMAEERQKLEYFQTVTANTCTISNFSISSLGDMIRSRYSTNHSRENLQKLQTVRDTIINFECQAGTSDGGTFDMETAQKLAEEYGCIDVIYHQSKGALSKRLGLKGRWNQSLICKDLLIFCGVAIGGTWMMFQSFKDGMADVIRHQGKGKRQRQKLRYRQARDNKMGIEVYGDDATMEHYFGAAYTEKGKKSGKTKGMGTKNRRFVNMYGYNPEDYSFIRFLDPLTGKTMDEQVFTDISLVQDAFGKERLKLLSEGEIESEHMRNGIRAYLVKNLTTAALEIDMTPHNSCQLGTKTNNIAGFVDREYELRQTGEARVVAPALIPKDNPITDEDIPVKHESKTLFRGLRDYNPIASAICLLTNESDGMKETMYGIGFGNTIITNQHLFRRNNGVLRVQSRHGEYVLPNTTQLKVLPCEGRDIMVIILTPDFPPFPQKLKFRPPIKGEKICLVGSLFQDKSITSTVSETSVTTPVDNSFLWKHWITTKDGHCGLPLVSSNDGYIVGIHSATSSRQTQNYHAAMPEDFHQTHLIDPVSKSWVKHWKYNPDNMVWGGINLINSTPREPFKINKLVTDLFGDAVQFQSKQDEWFASQLKGNLKAVGKSTSQLVTKHTVKGKCMMFELYLQTHEEEKEFFKPLMGAYQKSRLNREAFTKDIMKYSTPITVGIVDCDTFLKAEKGVIKRLEKLGFSGCEYVTDEEAIFQALNMKAAVGALYSGKKRDYFESYGPEEKENILRESCKRLYTGKFGVWNGSLKSELRPMEKVMANKTRVFTAAPLDTLLAGKVCVDDFNNYFYSKNIEAPWTVGMTKFYGGWNELLTKLPDGWVYCDADGSQFDSSLSPFLINSVLRIRLKFMEDWDLGEQMLKNLYTEIVYTAILTPDSTIVKKFKGNNSGQPSTVVDNTLMVVLAMTYTLHKLGFEDEEQDSMCKYFVNGDDLIIAIKPEYESLLDQFQHCFKSLGLNYDFNSRTRKREELWFMSHCGIKKDGIFIPKLEPERIVSILEWDRSDQPVHRLEAICAAMIESWGYDKLTHEIRKFYKWCLDEAPYADLAKAGKAPYIAECALKRLYTSKEASEAELEKYMEAIRSLVNDEDDDDMDEVYHQVDTKLDAGQGSKNDDKQKSSADSKDNVITEKGSGSGQVRKDDDINAGLHGKHTIPRTKAITQKMKLPMIRGKVALNLDHLLEYEPNQRDISNTRATQKQYESWYDGVKNDYDVDDNGMQLILNGLMVWCIENGTSPNINGTWVMMDSEEQVEYALKPIIEHAKPTFRQIMAHFSDAAEAYIEMRNKKKPYMPRYGRLRGLNDMGLARYAFDFYETTSATPNRAREAHNQMKAAALVGTQNRLFGMDGGGSTQEENTERHTAADVNQNMHTLLGVRGLH.

Residues 292–437 (VMNQQTLTAL…HTLTHRMVQY (146 aa)) form the Peptidase S30 domain. Residues His-345, Asp-354, and Ser-388 each act as for P1 proteinase activity in the active site. Positions 489–492 (KITC) match the Involved in interaction with stylet and aphid transmission motif. An Involved in virions binding and aphid transmission motif is present at residues 747 to 749 (PTK). The region spanning 773-895 (MFVAKDGYCY…ESEMQHYRVG (123 aa)) is the Peptidase C6 domain. Catalysis depends on for helper component proteinase activity residues Cys-781 and His-854. A Helicase ATP-binding domain is found at 1397–1549 (EIAHNEYRDI…PMHMVDITTE (153 aa)). 1410–1417 (GGVGSGKS) provides a ligand contact to ATP. The DECH box signature appears at 1499 to 1502 (DECH). Residues 1568 to 1727 (DATKKGDNIL…GLPVMTSNVS (160 aa)) enclose the Helicase C-terminal domain. The short motif at 2062–2069 (EKGKKSGK) is the Nuclear localization signal element. Position 2084 is an O-(5'-phospho-RNA)-tyrosine (Tyr-2084). A Peptidase C4 domain is found at 2215-2433 (SKTLFRGLRD…MVWGGINLIN (219 aa)). Residues His-2260, Asp-2295, and Cys-2365 each act as for nuclear inclusion protein A activity in the active site. Positions 2699–2823 (WVYCDADGSQ…AIKPEYESLL (125 aa)) constitute a RdRp catalytic domain. The interval 2980–3027 (TKLDAGQGSKNDDKQKSSADSKDNVITEKGSGSGQVRKDDDINAGLHG) is disordered. Over residues 2989-3005 (KNDDKQKSSADSKDNVI) the composition is skewed to basic and acidic residues.

The protein belongs to the potyviridae genome polyprotein family. Interacts with host eIF4E protein (via cap-binding region); this interaction mediates the translation of the VPg-viral RNA conjugates. Part of a complex that comprises VPg, RNA, host EIF4E and EIF4G; this interaction mediates the translation of the VPg-viral RNA conjugates. VPg is uridylylated by the polymerase and is covalently attached to the 5'-end of the genomic RNA. This uridylylated form acts as a nucleotide-peptide primer for the polymerase. In terms of processing, potyviral RNA is expressed as two polyproteins which undergo post-translational proteolytic processing. Genome polyprotein is processed by NIa-pro, P1 and HC-pro proteinases resulting in the production of at least ten individual proteins. P3N-PIPO polyprotein is cleaved by P1 and HC-pro proteinases resulting in the production of three individual proteins. The P1 proteinase and the HC-pro cleave only their respective C-termini autocatalytically. 6K1 is essential for proper proteolytic separation of P3 from CI.

Its subcellular location is the host cytoplasmic vesicle. It is found in the host nucleus. The protein localises to the virion. It catalyses the reaction RNA(n) + a ribonucleoside 5'-triphosphate = RNA(n+1) + diphosphate. It carries out the reaction Hydrolyzes glutaminyl bonds, and activity is further restricted by preferences for the amino acids in P6 - P1' that vary with the species of potyvirus, e.g. Glu-Xaa-Xaa-Tyr-Xaa-Gln-|-(Ser or Gly) for the enzyme from tobacco etch virus. The natural substrate is the viral polyprotein, but other proteins and oligopeptides containing the appropriate consensus sequence are also cleaved.. The enzyme catalyses Hydrolyzes a Gly-|-Gly bond at its own C-terminus, commonly in the sequence -Tyr-Xaa-Val-Gly-|-Gly, in the processing of the potyviral polyprotein.. Required for aphid transmission and also has proteolytic activity. Only cleaves a Gly-Gly dipeptide at its own C-terminus. Interacts with virions and aphid stylets. Acts as a suppressor of RNA-mediated gene silencing, also known as post-transcriptional gene silencing (PTGS), a mechanism of plant viral defense that limits the accumulation of viral RNAs. May have RNA-binding activity. In terms of biological role, has helicase activity. It may be involved in replication. Its function is as follows. Indispensable for virus replication. Functionally, mediates the cap-independent, EIF4E-dependent translation of viral genomic RNAs. Binds to the cap-binding site of host EIF4E and thus interferes with the host EIF4E-dependent mRNA export and translation. VPg-RNA directly binds EIF4E and is a template for transcription. Also forms trimeric complexes with EIF4E-EIF4G, which are templates for translation. Has RNA-binding and proteolytic activities. In terms of biological role, an RNA-dependent RNA polymerase that plays an essential role in the virus replication. Its function is as follows. Involved in aphid transmission, cell-to-cell and systemis movement, encapsidation of the viral RNA and in the regulation of viral RNA amplification. The protein is Genome polyprotein of Lettuce mosaic virus (strain E) (LMV).